The following is a 388-amino-acid chain: Processive diacylglycerol beta-glucosyltransferase (388 aa).

The protein belongs to the glycosyltransferase 28 family. UgtP subfamily.

It is found in the cell membrane. It catalyses the reaction a 1,2-diacyl-3-O-(beta-D-glucopyranosyl)-sn-glycerol + UDP-alpha-D-glucose = a 1,2-diacyl-3-O-(beta-D-Glc-(1-&gt;6)-beta-D-Glc)-sn-glycerol + UDP + H(+). The catalysed reaction is a 1,2-diacyl-3-O-(beta-D-Glc-(1-&gt;6)-beta-D-Glc)-sn-glycerol + UDP-alpha-D-glucose = a 1,2-diacyl-3-O-(beta-D-Glc-(1-&gt;6)-beta-D-Glc-(1-&gt;6)-beta-D-Glc)-sn-glycerol + UDP + H(+). It carries out the reaction a 1,2-diacyl-sn-glycerol + UDP-alpha-D-glucose = a 1,2-diacyl-3-O-(beta-D-glucopyranosyl)-sn-glycerol + UDP + H(+). It functions in the pathway glycolipid metabolism; diglucosyl-diacylglycerol biosynthesis. In terms of biological role, processive glucosyltransferase involved in the biosynthesis of both the bilayer- and non-bilayer-forming membrane glucolipids. Is able to successively transfer up to three glucosyl residues to diacylglycerol (DAG), thereby catalyzing the formation of beta-monoglucosyl-DAG (3-O-(beta-D-glucopyranosyl)-1,2-diacyl-sn-glycerol), beta-diglucosyl-DAG (3-O-(beta-D-glucopyranosyl-beta-(1-&gt;6)-D-glucopyranosyl)-1,2-diacyl-sn-glycerol) and beta-triglucosyl-DAG (3-O-(beta-D-glucopyranosyl-beta-(1-&gt;6)-D-glucopyranosyl-beta-(1-&gt;6)-D-glucopyranosyl)-1,2-diacyl-sn-glycerol). Beta-diglucosyl-DAG is the predominant glycolipid found in Bacillales and is also used as a membrane anchor for lipoteichoic acid (LTA). This Bacillus thuringiensis (strain Al Hakam) protein is Processive diacylglycerol beta-glucosyltransferase.